A 245-amino-acid chain; its full sequence is MALRLQMLGTGGAFAKKYFNNNALLYAGDFTLLIDCGITAPLALHTIGKSVEEIDAVLITHIHGDHVGGLEELAFRRKFGSGRKPILYIAENLVEPLWENTLKGGLSQDGVIHSLNDVFDVRLLKESEPAQLAPELKVELIRTPHIPGKPSYSLYINDEIFYSADMTFEPELLMRLVRERGCRRIFHEVQLTGKGEVHTTLQELLSLPTEIQSQILLKHYSDDMESFRGATGNMDFLRQHEVYTL.

A beta-lactamase-like region spans residues 19 to 219; the sequence is FNNNALLYAG…EIQSQILLKH (201 aa). 7 residues coordinate Zn(2+): histidine 61, histidine 63, aspartate 65, histidine 66, histidine 145, aspartate 165, and histidine 219.

This sequence belongs to the anti-Pycsar protein Apyc1 family. Homodimer. Requires Zn(2+) as cofactor.

The enzyme catalyses 3',5'-cyclic CMP + H2O = CMP + H(+). The catalysed reaction is 3',5'-cyclic UMP + H2O = UMP + H(+). Counteracts the endogenous Pycsar antiviral defense system. Phosphodiesterase that enables metal-dependent hydrolysis of host cyclic nucleotide Pycsar defense signals such as cCMP and cUMP. In Paenibacillus sp. (strain J14), this protein is Anti-Pycsar protein Apyc1.